The chain runs to 426 residues: 3-phosphoshikimate 1-carboxyvinyltransferase (426 aa).

3-phosphoshikimate is bound by residues Lys-22, Ser-23, and Arg-27. Phosphoenolpyruvate is bound at residue Lys-22. Positions 96 and 124 each coordinate phosphoenolpyruvate. 3-phosphoshikimate-binding residues include Ser-170, Ser-171, Gln-172, Ser-198, Asp-314, Asn-337, and Lys-341. Position 172 (Gln-172) interacts with phosphoenolpyruvate. Asp-314 acts as the Proton acceptor in catalysis. 3 residues coordinate phosphoenolpyruvate: Arg-345, Arg-387, and Lys-412.

Belongs to the EPSP synthase family. As to quaternary structure, monomer.

It is found in the cytoplasm. The enzyme catalyses 3-phosphoshikimate + phosphoenolpyruvate = 5-O-(1-carboxyvinyl)-3-phosphoshikimate + phosphate. It participates in metabolic intermediate biosynthesis; chorismate biosynthesis; chorismate from D-erythrose 4-phosphate and phosphoenolpyruvate: step 6/7. Its function is as follows. Catalyzes the transfer of the enolpyruvyl moiety of phosphoenolpyruvate (PEP) to the 5-hydroxyl of shikimate-3-phosphate (S3P) to produce enolpyruvyl shikimate-3-phosphate and inorganic phosphate. This is 3-phosphoshikimate 1-carboxyvinyltransferase from Shewanella sp. (strain ANA-3).